The sequence spans 445 residues: Exodeoxyribonuclease 7 large subunit (445 aa).

The protein belongs to the XseA family. As to quaternary structure, heterooligomer composed of large and small subunits.

It localises to the cytoplasm. The catalysed reaction is Exonucleolytic cleavage in either 5'- to 3'- or 3'- to 5'-direction to yield nucleoside 5'-phosphates.. Its function is as follows. Bidirectionally degrades single-stranded DNA into large acid-insoluble oligonucleotides, which are then degraded further into small acid-soluble oligonucleotides. The chain is Exodeoxyribonuclease 7 large subunit from Geotalea daltonii (strain DSM 22248 / JCM 15807 / FRC-32) (Geobacter daltonii).